The following is a 154-amino-acid chain: 6,7-dimethyl-8-ribityllumazine synthase (154 aa).

5-amino-6-(D-ribitylamino)uracil is bound by residues phenylalanine 22, 56–58 (SFE), and 80–82 (AVI). 85–86 (ST) provides a ligand contact to (2S)-2-hydroxy-3-oxobutyl phosphate. Histidine 88 serves as the catalytic Proton donor. Tyrosine 113 is a binding site for 5-amino-6-(D-ribitylamino)uracil. Arginine 127 contacts (2S)-2-hydroxy-3-oxobutyl phosphate.

It belongs to the DMRL synthase family. Forms an icosahedral capsid composed of 60 subunits, arranged as a dodecamer of pentamers.

It catalyses the reaction (2S)-2-hydroxy-3-oxobutyl phosphate + 5-amino-6-(D-ribitylamino)uracil = 6,7-dimethyl-8-(1-D-ribityl)lumazine + phosphate + 2 H2O + H(+). The protein operates within cofactor biosynthesis; riboflavin biosynthesis; riboflavin from 2-hydroxy-3-oxobutyl phosphate and 5-amino-6-(D-ribitylamino)uracil: step 1/2. In terms of biological role, catalyzes the formation of 6,7-dimethyl-8-ribityllumazine by condensation of 5-amino-6-(D-ribitylamino)uracil with 3,4-dihydroxy-2-butanone 4-phosphate. This is the penultimate step in the biosynthesis of riboflavin. The polypeptide is 6,7-dimethyl-8-ribityllumazine synthase (Persephonella marina (strain DSM 14350 / EX-H1)).